Reading from the N-terminus, the 158-residue chain is MGRFIFGSFGLLVVFLSLSGTGADFDCPPGWSAYDRYCYQAFSEPKTWEDAESFCMEGVKDSHLVSVESSGEADFVAQLVNENIKTSFRYVWIGLRIQNKEQQCRSEWSDASSVSYENLIKKVSKKCYGLKKGTELRTWFNVYCAELNPFICKFPPEC.

The first 23 residues, 1 to 23 (MGRFIFGSFGLLVVFLSLSGTGA), serve as a signal peptide directing secretion. 3 cysteine pairs are disulfide-bonded: Cys27–Cys38, Cys55–Cys152, and Cys127–Cys144. Residues 34 to 153 (YDRYCYQAFS…CAELNPFICK (120 aa)) form the C-type lectin domain.

The protein belongs to the snaclec family. As to quaternary structure, tetramer of heterodimers of alpha and beta subunits (alphabeta)(4); disulfide-linked. In terms of tissue distribution, expressed by the venom gland.

The protein localises to the secreted. In terms of biological role, snaclec that induces human platelet aggregation in the absence of any cofactor with the EC(50) of 0.25 nM and causes tyrosine phosphorylation in human platelets. Antibodies against either platelet GPIbalpha (GP1BA) or GPVI (GP6) inhibit alboaggregin D-induced platelet aggregation. Only the combination of these two antibodies completely inhibit aggregation, suggesting that it acts through both GPIbalpha (GP1BA) and GPVI (GP6). This Trimeresurus albolabris (White-lipped pit viper) protein is Snaclec alboaggregin-D subunit alpha.